A 349-amino-acid chain; its full sequence is Tribbles homolog 3 (349 aa).

An interaction with DDIT3/CHOP region spans residues 1–122 (MRATSLAASA…QHVARPTEVL (122 aa)). The segment at 35-57 (VRDEPEPGPTPSLPPASDLSPAV) is disordered. The 248-residue stretch at 63-310 (LGPYILLERE…ALGILLHPWL (248 aa)) folds into the Protein kinase domain. The interval 317–349 (VSPPRSDRREMDQVVPDGPQLEEAEEGEVGLYG) is disordered. A compositionally biased stretch (acidic residues) spans 336–349 (QLEEAEEGEVGLYG).

Belongs to the protein kinase superfamily. CAMK Ser/Thr protein kinase family. Tribbles subfamily. Interacts with AKT1, AKT2, MAP2K1 and MAP2K7. Interacts with ATF4. Interacts with DDIT3/CHOP and inhibits its interaction with EP300/P300. Interacts with APOBEC3C. Interacts (via N-terminus) with APOBEC3A. Interacts with RELA. Detected only in the lung. Not detected in the heart, brain, spleen, liver, skeletal muscle, kidney and testis.

It is found in the nucleus. Inactive protein kinase which acts as a regulator of the integrated stress response (ISR), a process for adaptation to various stress. Inhibits the transcriptional activity of DDIT3/CHOP and is involved in DDIT3/CHOP-dependent cell death during ER stress. May play a role in programmed neuronal cell death but does not appear to affect non-neuronal cells. Acts as a negative feedback regulator of the ATF4-dependent transcription during the ISR: while TRIB3 expression is promoted by ATF4, TRIB3 protein interacts with ATF4 and inhibits ATF4 transcription activity. Disrupts insulin signaling by binding directly to Akt kinases and blocking their activation. May bind directly to and mask the 'Thr-308' phosphorylation site in AKT1. Interacts with the NF-kappa-B transactivator p65 RELA and inhibits its phosphorylation and thus its transcriptional activation activity. Interacts with MAPK kinases and regulates activation of MAP kinases. Can inhibit APOBEC3A editing of nuclear DNA. This chain is Tribbles homolog 3 (Trib3), found in Rattus norvegicus (Rat).